Reading from the N-terminus, the 208-residue chain is uncharacterized protein (208 aa).

This is an uncharacterized protein from Saccharum officinarum (Sugarcane).